The chain runs to 205 residues: Ribosomal RNA small subunit methyltransferase G (205 aa).

S-adenosyl-L-methionine is bound by residues glycine 66, phenylalanine 71, 119–120 (IE), and arginine 135.

This sequence belongs to the methyltransferase superfamily. RNA methyltransferase RsmG family.

The protein resides in the cytoplasm. The enzyme catalyses guanosine(527) in 16S rRNA + S-adenosyl-L-methionine = N(7)-methylguanosine(527) in 16S rRNA + S-adenosyl-L-homocysteine. Functionally, specifically methylates the N7 position of guanine in position 527 of 16S rRNA. This chain is Ribosomal RNA small subunit methyltransferase G, found in Rhizobium johnstonii (strain DSM 114642 / LMG 32736 / 3841) (Rhizobium leguminosarum bv. viciae).